Consider the following 327-residue polypeptide: Biotin synthase (327 aa).

The Radical SAM core domain maps to 49 to 282; sequence FNKEKIDLCS…NKVIRLCGGR (234 aa). Positions 67, 71, and 74 each coordinate [4Fe-4S] cluster. Positions 110, 142, 201, and 277 each coordinate [2Fe-2S] cluster.

The protein belongs to the radical SAM superfamily. Biotin synthase family. Homodimer. It depends on [4Fe-4S] cluster as a cofactor. [2Fe-2S] cluster serves as cofactor.

The catalysed reaction is (4R,5S)-dethiobiotin + (sulfur carrier)-SH + 2 reduced [2Fe-2S]-[ferredoxin] + 2 S-adenosyl-L-methionine = (sulfur carrier)-H + biotin + 2 5'-deoxyadenosine + 2 L-methionine + 2 oxidized [2Fe-2S]-[ferredoxin]. Its pathway is cofactor biosynthesis; biotin biosynthesis; biotin from 7,8-diaminononanoate: step 2/2. Its function is as follows. Catalyzes the conversion of dethiobiotin (DTB) to biotin by the insertion of a sulfur atom into dethiobiotin via a radical-based mechanism. The sequence is that of Biotin synthase from Methanococcus maripaludis (strain DSM 14266 / JCM 13030 / NBRC 101832 / S2 / LL).